Here is a 113-residue protein sequence, read N- to C-terminus: UPF0482 protein YnfB (113 aa).

The first 28 residues, Met-1 to Ala-28, serve as a signal peptide directing secretion.

It belongs to the UPF0482 family.

This chain is UPF0482 protein YnfB, found in Salmonella agona (strain SL483).